Here is a 123-residue protein sequence, read N- to C-terminus: Small ribosomal subunit protein uS12 (123 aa).

D89 is subject to 3-methylthioaspartic acid. The interval 100-123 (GSLDTSGVSDRKQGRSKYGTKRPK) is disordered. The span at 113–123 (GRSKYGTKRPK) shows a compositional bias: basic residues.

This sequence belongs to the universal ribosomal protein uS12 family. Part of the 30S ribosomal subunit. Contacts proteins S8 and S17. May interact with IF1 in the 30S initiation complex.

Its function is as follows. With S4 and S5 plays an important role in translational accuracy. In terms of biological role, interacts with and stabilizes bases of the 16S rRNA that are involved in tRNA selection in the A site and with the mRNA backbone. Located at the interface of the 30S and 50S subunits, it traverses the body of the 30S subunit contacting proteins on the other side and probably holding the rRNA structure together. The combined cluster of proteins S8, S12 and S17 appears to hold together the shoulder and platform of the 30S subunit. The chain is Small ribosomal subunit protein uS12 from Saccharophagus degradans (strain 2-40 / ATCC 43961 / DSM 17024).